The primary structure comprises 238 residues: tRNA (guanine-N(7)-)-methyltransferase (238 aa).

Residues E68, E93, D121, and D143 each contribute to the S-adenosyl-L-methionine site. D143 is a catalytic residue. Substrate is bound by residues K147, D179, and 216–219 (TRYE).

Belongs to the class I-like SAM-binding methyltransferase superfamily. TrmB family.

It catalyses the reaction guanosine(46) in tRNA + S-adenosyl-L-methionine = N(7)-methylguanosine(46) in tRNA + S-adenosyl-L-homocysteine. The protein operates within tRNA modification; N(7)-methylguanine-tRNA biosynthesis. In terms of biological role, catalyzes the formation of N(7)-methylguanine at position 46 (m7G46) in tRNA. The sequence is that of tRNA (guanine-N(7)-)-methyltransferase from Paramagnetospirillum magneticum (strain ATCC 700264 / AMB-1) (Magnetospirillum magneticum).